We begin with the raw amino-acid sequence, 254 residues long: 5-oxoprolinase subunit A (254 aa).

It belongs to the LamB/PxpA family. As to quaternary structure, forms a complex composed of PxpA, PxpB and PxpC.

It catalyses the reaction 5-oxo-L-proline + ATP + 2 H2O = L-glutamate + ADP + phosphate + H(+). Catalyzes the cleavage of 5-oxoproline to form L-glutamate coupled to the hydrolysis of ATP to ADP and inorganic phosphate. The sequence is that of 5-oxoprolinase subunit A from Burkholderia lata (strain ATCC 17760 / DSM 23089 / LMG 22485 / NCIMB 9086 / R18194 / 383).